A 627-amino-acid chain; its full sequence is 1-deoxy-D-xylulose-5-phosphate synthase (627 aa).

Residues His-80 and 121–123 each bind thiamine diphosphate; that span reads GHS. A Mg(2+)-binding site is contributed by Asp-152. Residues 153–154, Asn-181, Tyr-288, and Glu-370 each bind thiamine diphosphate; that span reads GA. Asn-181 is a binding site for Mg(2+).

This sequence belongs to the transketolase family. DXPS subfamily. Homodimer. Mg(2+) is required as a cofactor. The cofactor is thiamine diphosphate.

It catalyses the reaction D-glyceraldehyde 3-phosphate + pyruvate + H(+) = 1-deoxy-D-xylulose 5-phosphate + CO2. It participates in metabolic intermediate biosynthesis; 1-deoxy-D-xylulose 5-phosphate biosynthesis; 1-deoxy-D-xylulose 5-phosphate from D-glyceraldehyde 3-phosphate and pyruvate: step 1/1. In terms of biological role, catalyzes the acyloin condensation reaction between C atoms 2 and 3 of pyruvate and glyceraldehyde 3-phosphate to yield 1-deoxy-D-xylulose-5-phosphate (DXP). In Aliivibrio salmonicida (strain LFI1238) (Vibrio salmonicida (strain LFI1238)), this protein is 1-deoxy-D-xylulose-5-phosphate synthase.